The following is a 388-amino-acid chain: Succinate--CoA ligase [ADP-forming] subunit beta (388 aa).

Positions 9-244 constitute an ATP-grasp domain; it reads KEILRQAGVP…LDEEDPAEVE (236 aa). Residues K46, 53–55, E99, A102, and E107 contribute to the ATP site; that span reads GRG. Mg(2+) contacts are provided by N199 and D213. Substrate is bound by residues N264 and 321-323; that span reads GIM.

The protein belongs to the succinate/malate CoA ligase beta subunit family. In terms of assembly, heterotetramer of two alpha and two beta subunits. The cofactor is Mg(2+).

The catalysed reaction is succinate + ATP + CoA = succinyl-CoA + ADP + phosphate. It catalyses the reaction GTP + succinate + CoA = succinyl-CoA + GDP + phosphate. The protein operates within carbohydrate metabolism; tricarboxylic acid cycle; succinate from succinyl-CoA (ligase route): step 1/1. Succinyl-CoA synthetase functions in the citric acid cycle (TCA), coupling the hydrolysis of succinyl-CoA to the synthesis of either ATP or GTP and thus represents the only step of substrate-level phosphorylation in the TCA. The beta subunit provides nucleotide specificity of the enzyme and binds the substrate succinate, while the binding sites for coenzyme A and phosphate are found in the alpha subunit. The protein is Succinate--CoA ligase [ADP-forming] subunit beta of Albidiferax ferrireducens (strain ATCC BAA-621 / DSM 15236 / T118) (Rhodoferax ferrireducens).